Reading from the N-terminus, the 200-residue chain is Probable nicotinate-nucleotide adenylyltransferase (200 aa).

It belongs to the NadD family.

It catalyses the reaction nicotinate beta-D-ribonucleotide + ATP + H(+) = deamido-NAD(+) + diphosphate. It functions in the pathway cofactor biosynthesis; NAD(+) biosynthesis; deamido-NAD(+) from nicotinate D-ribonucleotide: step 1/1. In terms of biological role, catalyzes the reversible adenylation of nicotinate mononucleotide (NaMN) to nicotinic acid adenine dinucleotide (NaAD). This chain is Probable nicotinate-nucleotide adenylyltransferase, found in Leifsonia xyli subsp. xyli (strain CTCB07).